A 211-amino-acid polypeptide reads, in one-letter code: Beta-crystallin B3 (211 aa).

Positions 1-21 (MTEQQSPPEQMVTGEGAGERG) are disordered. Residues 1–23 (MTEQQSPPEQMVTGEGAGERGGN) form an N-terminal arm region. Beta/gamma crystallin 'Greek key' domains follow at residues 24-63 (YKIT…QVES) and 64-108 (GPWL…RPLQ). A connecting peptide region spans residues 109–113 (IDSPD). Beta/gamma crystallin 'Greek key' domains are found at residues 114 to 155 (HKIH…RALN) and 156 to 198 (GTWV…RRVR). Residues 200–211 (QQWHQRGSFENS) are C-terminal arm.

Belongs to the beta/gamma-crystallin family. Homo/heterodimer, or complexes of higher-order. The structure of beta-crystallin oligomers seems to be stabilized through interactions between the N-terminal arms.

In terms of biological role, crystallins are the dominant structural components of the vertebrate eye lens. This is Beta-crystallin B3 (CRYBB3) from Gallus gallus (Chicken).